The chain runs to 511 residues: U3 snoRNP-associated protein-like YAOH (511 aa).

The segment covering 1 to 18 has biased composition (basic residues); the sequence is MAPRPRKRVSRPKPRATS. The tract at residues 1-117 is disordered; sequence MAPRPRKRVS…EDEDEGEEAG (117 aa). Composition is skewed to acidic residues over residues 44–53 and 66–80; these read EDIESEDSDL and DDGE…EQET. The span at 81–105 shows a compositional bias: basic and acidic residues; the sequence is AGEKKMRIAKELLKKVTDAARRRRE. WD repeat units follow at residues 158-197, 217-256, 259-298, 301-339, 342-380, 412-451, and 457-497; these read KHRQ…SEKY, KRSK…HIQA, GHRG…YMNC, GHQN…QLLF, PATA…PTHI, SAQS…KGIR, and RLDG…QNGV.

Belongs to the WD repeat RRP9 family.

It is found in the nucleus. It localises to the nucleolus. In terms of biological role, component of a nucleolar small nuclear ribonucleoprotein particle (snoRNP) thought to participate in the processing and modification of pre-ribosomal RNA. Essential for embryogenesis. The protein is U3 snoRNP-associated protein-like YAOH of Oryza sativa subsp. japonica (Rice).